The chain runs to 171 residues: Secreted LysM effector Blys4 (171 aa).

The 45-residue stretch at 125–169 (KPYTIHQGDTCWDIAESHSVGVDDILTLNPELDCDKLSIGSQICL) folds into the LysM domain.

The protein belongs to the secreted LysM effector family.

Might have a role in sequestration of chitin oligosaccharides (breakdown products of fungal cell walls that are released during invasion and act as triggers of host immunity) to dampen host defense. This is Secreted LysM effector Blys4 from Beauveria bassiana (strain ARSEF 2860) (White muscardine disease fungus).